A 146-amino-acid polypeptide reads, in one-letter code: Hemoglobin subunit beta (146 aa).

Val-1 bears the N-acetylvaline mark. The region spanning 2 to 146 is the Globin domain; that stretch reads HLTGEEKSAV…VANALAHKYH (145 aa). Phosphothreonine is present on Thr-12. The residue at position 44 (Ser-44) is a Phosphoserine. Residue Lys-59 is modified to N6-acetyllysine. His-63 is a binding site for heme b. Lys-82 carries the post-translational modification N6-acetyllysine. His-92 contributes to the heme b binding site. S-nitrosocysteine is present on Cys-93. Residue Lys-144 is modified to N6-acetyllysine.

Belongs to the globin family. In terms of assembly, heterotetramer of two alpha chains and two beta chains. Red blood cells.

Functionally, involved in oxygen transport from the lung to the various peripheral tissues. The protein is Hemoglobin subunit beta (HBB) of Phoca vitulina (Harbor seal).